A 239-amino-acid chain; its full sequence is Large ribosomal subunit protein uL2 (239 aa).

2 disordered regions span residues 1–21 (MGKS…KSPS) and 203–239 (PFGG…GRRK). Basic residues predominate over residues 222-239 (PPGRKVGHIAARRTGRRK).

It belongs to the universal ribosomal protein uL2 family. As to quaternary structure, part of the 50S ribosomal subunit. Forms a bridge to the 30S subunit in the 70S ribosome.

In terms of biological role, one of the primary rRNA binding proteins. Required for association of the 30S and 50S subunits to form the 70S ribosome, for tRNA binding and peptide bond formation. It has been suggested to have peptidyltransferase activity; this is somewhat controversial. Makes several contacts with the 16S rRNA in the 70S ribosome. The polypeptide is Large ribosomal subunit protein uL2 (Pyrococcus furiosus (strain ATCC 43587 / DSM 3638 / JCM 8422 / Vc1)).